The chain runs to 245 residues: Fibroblast growth factor 13 (245 aa).

A disordered region spans residues 1-36 (MAAAIASSLIRQKRQAREREKSNACKCVSSPSKGKT). Positions 1 to 62 (MAAAIASSLI…GSKKRRRRRP (62 aa)) are mediates targeting to the nucleus. The mediates interaction with sodium channels stretch occupies residues 67–201 (KGIVTKLYSR…AHFLPKPLKV (135 aa)). A Phosphoserine modification is found at S208. Residues 213–245 (TEFSRSGSGTPTKSRSVSGVLNGGKSMSHNEST) are disordered. Residues 215–245 (FSRSGSGTPTKSRSVSGVLNGGKSMSHNEST) show a composition bias toward polar residues.

Belongs to the heparin-binding growth factors family. Interacts with SCN8A; regulates SCN8A activity. Interacts with SCN1A; may regulate SCN1A activity. Interacts with SCN5A; the interaction is direct and may regulate SNC5A density at membranes and function. May also interact with SCN2A and SCN11A. Interacts with MAPK8IP2; may regulate the MAPK8IP2 scaffolding activity. May be phosphorylated. Ubiquitously expressed. Predominantly expressed in the nervous system.

It is found in the nucleus. It localises to the cytoplasm. The protein localises to the cell projection. The protein resides in the filopodium. Its subcellular location is the growth cone. It is found in the dendrite. It localises to the cell membrane. The protein localises to the sarcolemma. Microtubule-binding protein which directly binds tubulin and is involved in both polymerization and stabilization of microtubules. Through its action on microtubules, may participate in the refinement of axons by negatively regulating axonal and leading processes branching. Plays a crucial role in neuron polarization and migration in the cerebral cortex and the hippocampus. Regulates voltage-gated sodium channel transport and function. May also play a role in MAPK signaling. Required for the development of axonal initial segment-targeting inhibitory GABAergic synapses made by chandelier neurons. The sequence is that of Fibroblast growth factor 13 from Homo sapiens (Human).